A 525-amino-acid chain; its full sequence is Exoglucanase 1 (525 aa).

An N-terminal signal peptide occupies residues 1-18 (MRTAKFATLAALVASAAA). The segment at 19–467 (QQACSLTTER…AGNGGNNGGN (449 aa)) is catalytic. Catalysis depends on glutamate 231, which acts as the Nucleophile. Glutamate 236 (proton donor) is an active-site residue. Asparagine 289 carries N-linked (GlcNAc...) asparagine glycosylation. The disordered stretch occupies residues 454–492 (GLPGAGNGGNNGGNPPPPTTTTSSAPATTTTASAGPKAG). Over residues 456–465 (PGAGNGGNNG) the composition is skewed to gly residues. A linker region spans residues 468–489 (PPPPTTTTSSAPATTTTASAGP). Residues 473 to 489 (TTTSSAPATTTTASAGP) show a composition bias toward low complexity. The CBM1 domain occupies 489 to 525 (PKAGRWQQCGGIGFTGPTQCEEPYICTKLNDWYSQCL). 2 disulfide bridges follow: cysteine 497-cysteine 514 and cysteine 508-cysteine 524.

It belongs to the glycosyl hydrolase 7 (cellulase C) family.

It catalyses the reaction Hydrolysis of (1-&gt;4)-beta-D-glucosidic linkages in cellulose and cellotetraose, releasing cellobiose from the non-reducing ends of the chains.. In terms of biological role, the biological conversion of cellulose to glucose generally requires three types of hydrolytic enzymes: (1) Endoglucanases which cut internal beta-1,4-glucosidic bonds; (2) Exocellobiohydrolases that cut the disaccharide cellobiose from the non-reducing end of the cellulose polymer chain; (3) Beta-1,4-glucosidases which hydrolyze the cellobiose and other short cello-oligosaccharides to glucose. The polypeptide is Exoglucanase 1 (CBH-1) (Humicola insolens (Soft-rot fungus)).